Reading from the N-terminus, the 151-residue chain is Small ribosomal subunit protein uS13 (151 aa).

The protein belongs to the universal ribosomal protein uS13 family. As to quaternary structure, part of the 30S ribosomal subunit. Forms a loose heterodimer with protein S19. Forms two bridges to the 50S subunit in the 70S ribosome.

In terms of biological role, located at the top of the head of the 30S subunit, it contacts several helices of the 16S rRNA. In the 70S ribosome it contacts the 23S rRNA (bridge B1a) and protein L5 of the 50S subunit (bridge B1b), connecting the 2 subunits; these bridges are implicated in subunit movement. The protein is Small ribosomal subunit protein uS13 of Methanospirillum hungatei JF-1 (strain ATCC 27890 / DSM 864 / NBRC 100397 / JF-1).